The following is a 469-amino-acid chain: Glutamate--tRNA ligase (469 aa).

The short motif at 9-19 (PSPTGFLHVGG) is the 'HIGH' region element. A 'KMSKS' region motif is present at residues 236-240 (KLSKR). Residue Lys-239 participates in ATP binding.

The protein belongs to the class-I aminoacyl-tRNA synthetase family. Glutamate--tRNA ligase type 1 subfamily. As to quaternary structure, monomer.

The protein localises to the cytoplasm. The enzyme catalyses tRNA(Glu) + L-glutamate + ATP = L-glutamyl-tRNA(Glu) + AMP + diphosphate. Catalyzes the attachment of glutamate to tRNA(Glu) in a two-step reaction: glutamate is first activated by ATP to form Glu-AMP and then transferred to the acceptor end of tRNA(Glu). The sequence is that of Glutamate--tRNA ligase from Pseudoalteromonas atlantica (strain T6c / ATCC BAA-1087).